Here is a 461-residue protein sequence, read N- to C-terminus: MALAIYNTLSKAKEPFRPLEGNKVRMYVCGMTVYDFCHIGHARVMVAFDVVTRWLRHRGYDVTYVRNITDIDDKIIRRASENGEPFQALVERMIAAMHEDETRLNVLRPDVEPRATDHIAGMHTMIQTLIDKGFAYAPGNGDVYYRVGKFVGYGKLSRRKIEDLKIGARIEVDEAKEDPLDFVLWKGAKPGEPSWDSPWGPGRPGWHIECSVMSTCCLGETFDIHGGGPDLVFPHHENEIAQSEAATGKLYANAWMHAGAVRVDGEKMSKSLGNFFTIREVLEKYHPEVVRYLLVSSHYRSPINYSEDSLREAKSALERFYNGLKGLPEAQPAGGDEFVARFAAAMDDDFNSPEACAVLFEMIREVNRLREADLAAAAALAARLKVLAGVLGVLQLEPDAFLQAGAAGKVDAAEVEALIAARLAARAEKNWGESDRIRDQLTAMGVVLEDGKGGTTWRLAE.

C29 is a Zn(2+) binding site. A 'HIGH' region motif is present at residues 31 to 41; the sequence is MTVYDFCHIGH. 3 residues coordinate Zn(2+): C210, H235, and E239. A 'KMSKS' region motif is present at residues 267-271; it reads KMSKS. An ATP-binding site is contributed by K270.

It belongs to the class-I aminoacyl-tRNA synthetase family. As to quaternary structure, monomer. It depends on Zn(2+) as a cofactor.

The protein resides in the cytoplasm. The enzyme catalyses tRNA(Cys) + L-cysteine + ATP = L-cysteinyl-tRNA(Cys) + AMP + diphosphate. The chain is Cysteine--tRNA ligase from Stutzerimonas stutzeri (strain A1501) (Pseudomonas stutzeri).